Consider the following 518-residue polypeptide: Protein nucleotidyltransferase YdiU (518 aa).

Basic and acidic residues predominate over residues 1–10 (MTHLHFDNRL). The segment at 1 to 25 (MTHLHFDNRLRQQLPGDPEEGARRR) is disordered. G100, G102, R103, K123, D135, G136, R193, and R200 together coordinate ATP. D270 (proton acceptor) is an active-site residue. Mg(2+) contacts are provided by N271 and D280. D280 contacts ATP.

Belongs to the SELO family. It depends on Mg(2+) as a cofactor. Requires Mn(2+) as cofactor.

It catalyses the reaction L-seryl-[protein] + ATP = 3-O-(5'-adenylyl)-L-seryl-[protein] + diphosphate. The enzyme catalyses L-threonyl-[protein] + ATP = 3-O-(5'-adenylyl)-L-threonyl-[protein] + diphosphate. The catalysed reaction is L-tyrosyl-[protein] + ATP = O-(5'-adenylyl)-L-tyrosyl-[protein] + diphosphate. It carries out the reaction L-histidyl-[protein] + UTP = N(tele)-(5'-uridylyl)-L-histidyl-[protein] + diphosphate. It catalyses the reaction L-seryl-[protein] + UTP = O-(5'-uridylyl)-L-seryl-[protein] + diphosphate. The enzyme catalyses L-tyrosyl-[protein] + UTP = O-(5'-uridylyl)-L-tyrosyl-[protein] + diphosphate. Nucleotidyltransferase involved in the post-translational modification of proteins. It can catalyze the addition of adenosine monophosphate (AMP) or uridine monophosphate (UMP) to a protein, resulting in modifications known as AMPylation and UMPylation. This Xanthomonas euvesicatoria pv. vesicatoria (strain 85-10) (Xanthomonas campestris pv. vesicatoria) protein is Protein nucleotidyltransferase YdiU.